Here is a 665-residue protein sequence, read N- to C-terminus: Prelamin-A/C (665 aa).

Met-1 is modified (N-acetylmethionine). The interval Met-1–Thr-27 is disordered. The segment at Met-1–Glu-33 is head. An interaction with MLIP region spans residues Met-1–Ala-130. At Thr-3 the chain carries Phosphothreonine. The residue at position 5 (Ser-5) is a Phosphoserine. Thr-10 is modified (phosphothreonine). 2 positions are modified to phosphoserine: Ser-12 and Ser-18. The residue at position 19 (Thr-19) is a Phosphothreonine. Ser-22 carries the post-translational modification Phosphoserine. Positions Glu-31 to Leu-387 constitute an IF rod domain. N6-acetyllysine; alternate is present on Lys-32. Position 32 is an N6-succinyllysine; alternate (Lys-32). Residue Lys-32 forms a Glycyl lysine isopeptide (Lys-Gly) (interchain with G-Cter in SUMO2); alternate linkage. Positions Asp-34–Val-70 are coil 1A. Phosphoserine occurs at positions 51, 66, and 71. The interval Ser-71 to Ala-80 is linker 1. An N6-acetyllysine mark is found at Lys-78 and Lys-97. A coil 1B region spans residues Tyr-81–Thr-218. Lys-97 is covalently cross-linked (Glycyl lysine isopeptide (Lys-Gly) (interchain with G-Cter in SUMO2)). At Ser-107 the chain carries Phosphoserine. Lys-108, Lys-114, Lys-123, Lys-135, Lys-144, and Lys-155 each carry N6-acetyllysine. Lys-171 is subject to N6-acetyllysine; alternate. Lys-171 is modified (N6-succinyllysine; alternate). Lys-171 is covalently cross-linked (Glycyl lysine isopeptide (Lys-Gly) (interchain with G-Cter in SUMO2); alternate). N6-acetyllysine occurs at positions 180, 201, and 208. Residue Lys-201 forms a Glycyl lysine isopeptide (Lys-Gly) (interchain with G-Cter in SUMO2); alternate linkage. Residue Lys-201 forms a Glycyl lysine isopeptide (Lys-Gly) (interchain with G-Cter in SUMO); alternate linkage. A Glycyl lysine isopeptide (Lys-Gly) (interchain with G-Cter in SUMO2) cross-link involves residue Lys-208. Phosphoserine is present on Ser-212. Glycyl lysine isopeptide (Lys-Gly) (interchain with G-Cter in SUMO2) cross-links involve residues Lys-219 and Lys-233. The linker 2 stretch occupies residues Lys-219–Ala-242. N6-acetyllysine is present on residues Lys-233, Lys-260, Lys-265, and Lys-270. A coil 2 region spans residues Asp-243–Glu-383. Lys-260 participates in a covalent cross-link: Glycyl lysine isopeptide (Lys-Gly) (interchain with G-Cter in SUMO2); alternate. Lys-270 is covalently cross-linked (Glycyl lysine isopeptide (Lys-Gly) (interchain with G-Cter in SUMO2); alternate). 4 positions are modified to phosphoserine: Ser-277, Ser-282, Ser-301, and Ser-307. Residue Lys-311 forms a Glycyl lysine isopeptide (Lys-Gly) (interchain with G-Cter in SUMO2); alternate linkage. Residues Lys-311, Lys-316, and Lys-341 each carry the N6-acetyllysine modification. Glycyl lysine isopeptide (Lys-Gly) (interchain with G-Cter in SUMO2) cross-links involve residues Lys-366 and Lys-378. A disordered region spans residues Glu-384 to Val-442. Positions Glu-384–Met-665 are tail. Ser-390, Ser-392, Ser-395, Ser-398, Ser-403, Ser-404, Ser-406, Ser-407, Ser-409, and Ser-414 each carry phosphoserine. The segment covering Ser-395–Ser-409 has biased composition (low complexity). Thr-416 carries the phosphothreonine modification. N6-acetyllysine is present on Lys-417. Glycyl lysine isopeptide (Lys-Gly) (interchain with G-Cter in SUMO2) cross-links involve residues Lys-417 and Lys-420. Residues Lys-417–Glu-422 carry the Nuclear localization signal motif. Phosphoserine occurs at positions 423, 426, 429, and 431. The LTD domain maps to Ser-428–Arg-545. A Glycyl lysine isopeptide (Lys-Gly) (interchain with G-Cter in SUMO2); alternate cross-link involves residue Lys-450. Residues Lys-450 and Lys-457 each carry the N6-acetyllysine modification. Residues Ser-458 and Ser-463 each carry the phosphoserine modification. Residues Lys-470 and Lys-486 each participate in a glycyl lysine isopeptide (Lys-Gly) (interchain with G-Cter in SUMO2) cross-link. Residue Lys-486 is modified to N6-acetyllysine. Position 496 is a phosphothreonine (Thr-496). A Phosphoserine modification is found at Ser-500. Phosphothreonine is present on residues Thr-505 and Thr-510. A Phosphoserine modification is found at Ser-546. At Thr-548 the chain carries Phosphothreonine. Residues Asp-552 to Asp-561 are compositionally biased toward acidic residues. The interval Asp-552 to Asp-577 is disordered. Phosphoserine occurs at positions 570 and 573. Lys-599 is covalently cross-linked (Glycyl lysine isopeptide (Lys-Gly) (interchain with G-Cter in SUMO2); alternate). A Glycyl lysine isopeptide (Lys-Gly) (interchain with G-Cter in SUMO1); alternate cross-link involves residue Lys-599. Phosphoserine is present on residues Ser-613, Ser-614, Ser-617, and Ser-620. O-linked (GlcNAc) serine glycosylation is found at Ser-626 and Ser-629. A phosphoserine mark is found at Ser-629, Ser-633, Ser-637, and Ser-653. Positions Leu-648–Cys-662 are cleaved as a propeptide — removed in Lamin-A/C form. A Cysteine methyl ester modification is found at Cys-662. Cys-662 is lipidated: S-farnesyl cysteine. Residues Ser-663–Met-665 constitute a propeptide, removed in Prelamin-A/C form and in Lamin-A/C form.

The protein belongs to the intermediate filament family. As to quaternary structure, homodimer of lamin A and lamin C. Lamin dimers then assemble into dimeric head-to-tail polymers. Ultimately, two head-to-tail polymers assemble laterally into a protofilament with a uniformly shaped rod of 3.5 nm in diameter. Interacts with lamin-associated polypeptides IA, IB and TMPO-alpha, RB1 and with emerin. Interacts with SREBF1, SREBF2, SUN2 and TMEM43. Interacts with TMEM201. Proteolytically processed isoform A interacts with NARF. Interacts with SUN1. Interacts with MLIP. Interacts with DMPK; may regulate nuclear envelope stability. Interacts with SUV39H1; the interaction increases stability of SUV39H1. Interacts with SYNE2. Interacts with ITSN1 isoform 2. Interacts with IFFO1; enables the formation of an interior nucleoskeleton that is recruited to DNA double-strand breaks. Interacts with EMD. In terms of assembly, interacts (via C-terminus) with LEMD2 (via N-terminus) (in vitro). In terms of processing, proteolytic cleavage of the C-terminal of 18 residues of prelamin-A/C results in the production of lamin-A/C. The prelamin-A/C maturation pathway includes farnesylation of CAAX motif by protein farnesyltransferase (FNTA and FNTB), removal of the last three amino acids (-AAX) by RCE1/FACE2 and/or ZMPSTE24, methylation of the C-terminal cysteine by ICMT and endoproteolytic removal of the last 15 C-terminal amino acids by ZMPSTE24. Proteolytic cleavage requires prior farnesylation and methylation, and absence of these blocks cleavage. Farnesylation of prelamin-A/C facilitates nuclear envelope targeting. Post-translationally, phosphorylation plays a key role in lamin organization, subcellular localization and nuclear envelope disintegration. Phosphorylation by CDK1 at Ser-22 and Ser-392 at the onset of mitosis drives lamin disassembly and nuclear envelope breakdown. Phosphorylation at Ser-22 and Ser-392 during interphase promotes localization to the nucleoplasm and regulates lamina assembly. Phosphorylation at Ser-22, Ser-392 and Ser-629 during interphase causes redistribution between the nucleus and the cytoplasm. Phosphorylation at Ser-22 by CDK1 regulates matrix stiffness. Phosphorylation status of Ser-22 determines its localization between double-strand break (DSB) sites and the nuclear matrix. Phosphorylated by ATR at Ser-282 in response to DNA damage, leading to lamin disassembly and nuclear envelope rupture. Phosphorylation also regulates stability in micronuclei arising from genome instability: phosphorylation at Ser-395 by ATR in response to genome instability and double-stranded DNA breaks primes LMNA for subsequent phosphorylation at Ser-392 by CDK1 and micronuclei envelope rupture. The rupture of micronuclear envelope triggers the cGAS-STING pathway thereby activating the type I interferon response and innate immunity. In terms of processing, acetylation by KAT8 is required for nuclear architecture. Sumoylation is necessary for the localization to the nuclear envelope.

The protein localises to the nucleus lamina. Its subcellular location is the nucleus envelope. It is found in the nucleus. The protein resides in the nucleoplasm. It localises to the nucleus matrix. Lamins are intermediate filament proteins that assemble into a filamentous meshwork, and which constitute the major components of the nuclear lamina, a fibrous layer on the nucleoplasmic side of the inner nuclear membrane. Lamins provide a framework for the nuclear envelope, bridging the nuclear envelope and chromatin, thereby playing an important role in nuclear assembly, chromatin organization, nuclear membrane and telomere dynamics. Lamin A and C also regulate matrix stiffness by conferring nuclear mechanical properties. The structural integrity of the lamina is strictly controlled by the cell cycle, as seen by the disintegration and formation of the nuclear envelope in prophase and telophase, respectively. Lamin A and C are present in equal amounts in the lamina of mammals. Also invoved in DNA repair: recruited by DNA repair proteins XRCC4 and IFFO1 to the DNA double-strand breaks (DSBs) to prevent chromosome translocation by immobilizing broken DNA ends. Required for normal development of peripheral nervous system and skeletal muscle and for muscle satellite cell proliferation. Required for osteoblastogenesis and bone formation. Also prevents fat infiltration of muscle and bone marrow, helping to maintain the volume and strength of skeletal muscle and bone. Required for cardiac homeostasis. Functionally, prelamin-A/C can accelerate smooth muscle cell senescence. It acts to disrupt mitosis and induce DNA damage in vascular smooth muscle cells (VSMCs), leading to mitotic failure, genomic instability, and premature senescence. In Rattus norvegicus (Rat), this protein is Prelamin-A/C (Lmna).